We begin with the raw amino-acid sequence, 467 residues long: Inactive pancreatic lipase-related protein 1 (467 aa).

The first 17 residues, methionine 1–alanine 17, serve as a signal peptide directing secretion. Disulfide bonds link cysteine 21–cysteine 27 and cysteine 109–cysteine 120. A glycan (N-linked (GlcNAc...) asparagine) is linked at asparagine 157. The Nucleophile role is filled by serine 171. Residue aspartate 194 is the Charge relay system of the active site. Ca(2+) contacts are provided by glutamate 205, arginine 208, aspartate 210, and aspartate 213. A disulfide bridge connects residues cysteine 255 and cysteine 279. The Charge relay system role is filled by histidine 281. Cystine bridges form between cysteine 303/cysteine 314, cysteine 317/cysteine 322, and cysteine 451/cysteine 467. The PLAT domain occupies tryptophan 356 to cysteine 467.

The protein belongs to the AB hydrolase superfamily. Lipase family. Detected in pancreas (at protein level).

The protein resides in the secreted. Its function is as follows. May function as inhibitor of dietary triglyceride digestion. Lacks detectable lipase activity towards triglycerides, diglycerides, phosphatidylcholine, galactolipids or cholesterol esters (in vitro). The protein is Inactive pancreatic lipase-related protein 1 (PNLIPRP1) of Canis lupus familiaris (Dog).